The following is a 149-amino-acid chain: Large ribosomal subunit protein uL11 (149 aa).

This sequence belongs to the universal ribosomal protein uL11 family. Part of the ribosomal stalk of the 50S ribosomal subunit. Interacts with L10 and the large rRNA to form the base of the stalk. L10 forms an elongated spine to which L12 dimers bind in a sequential fashion forming a multimeric L10(L12)X complex. One or more lysine residues are methylated.

Its function is as follows. Forms part of the ribosomal stalk which helps the ribosome interact with GTP-bound translation factors. The sequence is that of Large ribosomal subunit protein uL11 from Methylobacterium sp. (strain 4-46).